The sequence spans 148 residues: Transcriptional regulator MraZ (148 aa).

2 consecutive SpoVT-AbrB domains span residues 5–51 and 80–123; these read ATSL…PLPA and AEDV…SMEA.

Belongs to the MraZ family. As to quaternary structure, forms oligomers.

The protein localises to the cytoplasm. The protein resides in the nucleoid. This Methylobacillus flagellatus (strain ATCC 51484 / DSM 6875 / VKM B-1610 / KT) protein is Transcriptional regulator MraZ.